A 759-amino-acid chain; its full sequence is MPVKVYAEEMEGESMKKKKLSETPLPKIKKRKMKNGDTEDLDLEHMAESVNGEINNNNPTPKLKKKKKPAPISDLSETAEECDGEQPDPSTPTPKKVKKKKIKESKEDSDTQEEAEQSEPQTNGVKSVKKSKKNITSDDNEPAPKKRKTDTTEITTAKECEEKVLTKEEQDINQEKIDGDFSKFPLSKETIKNLQAKGVSYLFPIQSKTFHTAYSGKDVVVQARTGTGKTFSFAIPLVEKLNEDQQPLARGRAPRVIILTPTRELAIQITNEIRSITKKLKVSCFYGGTPYQQQVFAIKDGIDFLVGTPGRVRDLVQNYRLDLTTLKHVVLDEVDMMFDMGFSEQVEEILSVRYKADPEENPQTLLFSATCPDWMYNMAKKYMRKQFEKIDLIGHRSQKAATTVEHLAIECTRSQKAAVLGDLVQVYSGSHGKTIIFCDSKLEAHTLATSCGSLKQSAKSLHGDLQQKEREVVLKGFRQGTFEVLIATNVAARGLDIPEVDLVVLYSAPKEADAYVHRSGRTGRAGRTGVCISLYEPWERHYLRNVERSTGITFKRVGVPSLLNVAKSSSADAIKSLDTVPADVIEHFKEYAQELIEQKGALTAIAAALAHISGATSIKQRSLLNMEAGCDTITLKSSVPIHSLSYAWQSIKEQLGDDVDSKIHRMCLLKDSMGVCFDVRSENLESMQERWTDTKQWQFTVATELPAIQESERNFDGPRNRGFGGRGRRPFDRRNNSRNSNRGGGGRGRNRNGGFRRGR.

The interval 1–154 is disordered; that stretch reads MPVKVYAEEM…KKRKTDTTEI (154 aa). The segment covering 77 to 86 has biased composition (acidic residues); sequence ETAEECDGEQ. A Q motif motif is present at residues 179–207; that stretch reads GDFSKFPLSKETIKNLQAKGVSYLFPIQS. Positions 210–389 constitute a Helicase ATP-binding domain; sequence FHTAYSGKDV…KKYMRKQFEK (180 aa). 223–230 lines the ATP pocket; that stretch reads ARTGTGKT. The DEAD box signature appears at 332–335; it reads DEVD. The 145-residue stretch at 422-566 folds into the Helicase C-terminal domain; that stretch reads DLVQVYSGSH…VGVPSLLNVA (145 aa). The interval 709 to 759 is disordered; it reads QESERNFDGPRNRGFGGRGRRPFDRRNNSRNSNRGGGGRGRNRNGGFRRGR. Over residues 710–719 the composition is skewed to basic and acidic residues; the sequence is ESERNFDGPR. Over residues 748–759 the composition is skewed to basic residues; the sequence is GRNRNGGFRRGR.

It belongs to the DEAD box helicase family. DDX21/DDX50 subfamily. Widely expressed. Expressed at higher level in stomach. Expressed at higher level compared to ddx21-b.

The protein resides in the nucleus. It is found in the nucleolus. The protein localises to the nucleoplasm. It localises to the cytoplasm. Its subcellular location is the cytosol. The protein resides in the mitochondrion. It catalyses the reaction ATP + H2O = ADP + phosphate + H(+). RNA helicase that acts as a sensor of the transcriptional status of both RNA polymerase (Pol) I and II: promotes ribosomal RNA (rRNA) processing and transcription from polymerase II (Pol II). Binds various RNAs, such as rRNAs, snoRNAs, 7SK and, at lower extent, mRNAs. In the nucleolus, localizes to rDNA locus, where it directly binds rRNAs and snoRNAs, and promotes rRNA transcription, processing and modification. Required for rRNA 2'-O-methylation, possibly by promoting the recruitment of late-acting snoRNAs SNORD56 and SNORD58 with pre-ribosomal complexes. In the nucleoplasm, binds 7SK RNA and is recruited to the promoters of Pol II-transcribed genes: acts by facilitating the release of P-TEFb from inhibitory 7SK snRNP in a manner that is dependent on its helicase activity, thereby promoting transcription of its target genes. Required to prevent R-loop-associated DNA damage and transcription-associated genomic instability. This Xenopus laevis (African clawed frog) protein is Nucleolar RNA helicase 2-A (ddx21-a).